The sequence spans 167 residues: Transmembrane protein 229B (167 aa).

Topologically, residues 1–14 (MAAAEPLTAFSRWY) are cytoplasmic. The chain crosses the membrane as a helical span at residues 15–35 (LYAIHGYFCEVMFTAAWEFVV). Residues 36-40 (NFNWK) lie on the Extracellular side of the membrane. Residues 41–61 (FPGVTSVWALFIYGTSILIVE) form a helical membrane-spanning segment. At 62 to 72 (KMYLYLKDKCH) the chain is on the cytoplasmic side. The chain crosses the membrane as a helical span at residues 73–93 (ILVRCFIYTLWTYLWEFTTGL). Residues 94–109 (ILRQFNACPWDYSQFD) are Extracellular-facing. The helical transmembrane segment at 110–130 (FDFMGLITLEYAIPWFCASFI) threads the bilayer. At 131–167 (MEQLVIRNTLRLRFDETAEPGAPTVPVALANGHVKTD) the chain is on the cytoplasmic side.

Belongs to the TMEM229 family.

The protein localises to the membrane. In Gallus gallus (Chicken), this protein is Transmembrane protein 229B (TMEM229B).